A 181-amino-acid polypeptide reads, in one-letter code: NADH-quinone oxidoreductase subunit I (181 aa).

4Fe-4S ferredoxin-type domains follow at residues 52–81 and 91–120; these read TRDS…LKKS and EFFR…LISD. The [4Fe-4S] cluster site is built by Cys61, Cys64, Cys67, Cys71, Cys100, Cys103, Cys106, and Cys110.

The protein belongs to the complex I 23 kDa subunit family. NDH-1 is composed of 13 different subunits. Subunits NuoA, H, J, K, L, M, N constitute the membrane sector of the complex. The cofactor is [4Fe-4S] cluster.

The protein localises to the cell inner membrane. The enzyme catalyses a quinone + NADH + 5 H(+)(in) = a quinol + NAD(+) + 4 H(+)(out). Functionally, NDH-1 shuttles electrons from NADH, via FMN and iron-sulfur (Fe-S) centers, to quinones in the respiratory chain. The immediate electron acceptor for the enzyme in this species is believed to be ubiquinone. Couples the redox reaction to proton translocation (for every two electrons transferred, four hydrogen ions are translocated across the cytoplasmic membrane), and thus conserves the redox energy in a proton gradient. The protein is NADH-quinone oxidoreductase subunit I of Blochmanniella floridana.